The following is a 502-amino-acid chain: Hippocampus abundant transcript-like protein 1 (502 aa).

Over residues 1-12 the composition is skewed to basic and acidic residues; it reads MNAEPPEEKAAS. Positions 1-27 are disordered; that stretch reads MNAEPPEEKAASEAEAGAMPEKRAGSR. Residues 1–46 are Extracellular-facing; it reads MNAEPPEEKAASEAEAGAMPEKRAGSRAAGGNSLQGFGRPSVYHAA. The helical transmembrane segment at 47–67 threads the bilayer; the sequence is IVIFLEFFAWGLLTTSMLTVL. The Cytoplasmic portion of the chain corresponds to 68-79; sequence HETFPQHTFLMN. Residues 80-100 form a helical membrane-spanning segment; sequence GLIQGVKGLLSFLSAPLIGAL. Topologically, residues 101 to 108 are extracellular; it reads SDVWGRKP. Residues 109-129 form a helical membrane-spanning segment; it reads FLLGTVFFTCFPIPLMRISPW. Over 130 to 131 the chain is Cytoplasmic; that stretch reads WY. A helical transmembrane segment spans residues 132–152; the sequence is FAMISISGVFSVTFSVIFAYV. The Extracellular segment spans residues 153-165; the sequence is ADVTQEHERSTAY. Residues 166-186 form a helical membrane-spanning segment; sequence GWVSATFAASLVSSPAIGAYL. Residues 187-193 are Cytoplasmic-facing; that stretch reads SASYGDS. A helical transmembrane segment spans residues 194 to 214; the sequence is LVVLVATVVALLDICFILLAV. Over 215 to 248 the chain is Extracellular; sequence PESLPEKMRPLSWGARISWKQADPFASLKKVGKD. The chain crosses the membrane as a helical span at residues 249 to 269; that stretch reads STILLICITVFLSYLPEAGQY. Residues 270-278 are Cytoplasmic-facing; sequence SSFFLYLRQ. The chain crosses the membrane as a helical span at residues 279–299; sequence VIGFGSIKIAAFIAMVGILSI. The Extracellular portion of the chain corresponds to 300 to 316; the sequence is VAQTVFLTSLMRSLGNK. The chain crosses the membrane as a helical span at residues 317–337; that stretch reads NTVLLGLGFQMFQLAWYGFGS. Q338 is a topological domain (cytoplasmic). The helical transmembrane segment at 339-359 threads the bilayer; the sequence is AWMMWAAGIVAAVSSITFPAV. Residues 360-384 lie on the Extracellular side of the membrane; it reads STLVSQNADSNQQGVAQGIITGIRG. A helical transmembrane segment spans residues 385–405; sequence LCNGLGPALYGFIFYMFHVEL. Topologically, residues 406-425 are cytoplasmic; sequence TELEPELISNNAALQGAVIP. Residues 426–446 form a helical membrane-spanning segment; sequence GPPFLFGACIVFMSFLVAVFI. Over 447–502 the chain is Extracellular; the sequence is PEYSKGGIQKHSNSISGSLANTPERGSDEDIEPLLQDSSIWELSSLEEPGHQCTEL.

Belongs to the major facilitator superfamily.

The protein localises to the membrane. The polypeptide is Hippocampus abundant transcript-like protein 1 (Bos taurus (Bovine)).